The primary structure comprises 131 residues: Profilin-3 (131 aa).

Belongs to the profilin family. Occurs in many kinds of cells as a complex with monomeric actin in a 1:1 ratio.

The protein localises to the cytoplasm. It is found in the cytoskeleton. In terms of biological role, binds to actin and affects the structure of the cytoskeleton. At high concentrations, profilin prevents the polymerization of actin, whereas it enhances it at low concentrations. By binding to PIP2, it inhibits the formation of IP3 and DG. The sequence is that of Profilin-3 from Hevea brasiliensis (Para rubber tree).